The sequence spans 832 residues: Putative pentatricopeptide repeat-containing protein At5g08310, mitochondrial (832 aa).

Residues Met-1 to Leu-27 constitute a mitochondrion transit peptide. PPR repeat units follow at residues Asp-105–Met-139, Ser-140–Val-174, Asn-176–Phe-212, Asp-213–Asp-247, Thr-252–Leu-281, Asn-282–Ala-316, Asp-317–Pro-351, Asp-352–Lys-383, Val-385–Asn-415, Asp-438–Pro-472, Gly-473–Pro-507, Ser-508–Pro-542, Trp-543–Gly-577, His-578–Pro-612, Asp-613–Pro-647, Thr-648–Pro-682, Asp-683–Pro-717, Asn-718–Pro-752, and Asp-753–Pro-787.

It belongs to the PPR family. P subfamily.

It is found in the mitochondrion. The sequence is that of Putative pentatricopeptide repeat-containing protein At5g08310, mitochondrial from Arabidopsis thaliana (Mouse-ear cress).